The chain runs to 330 residues: GRB2-related adapter protein 2 (330 aa).

Residues 1–56 (MEAVAKFDFTASGEDELSFHTGDVLKILSNQEEWFKAELGSQEGYVPKNFIDIQFP) enclose the SH3 1 domain. Phosphotyrosine is present on Tyr45. The SH2 domain occupies 58–149 (WFHEGLSRHQ…QKQIFLRDRT (92 aa)). Position 106 is an N6-acetyllysine (Lys106). The interval 143-244 (IFLRDRTRED…GSLDINDGHC (102 aa)) is disordered. Residues 144-164 (FLRDRTREDQGHRGNSLDRRS) are compositionally biased toward basic and acidic residues. The residue at position 187 (Ser187) is a Phosphoserine. Low complexity predominate over residues 209 to 222 (PAPQQLQQPPQQRY). At Ser236 the chain carries Phosphoserine. Phosphothreonine is present on Thr262. Positions 271–330 (GRVRWARALYDFEALEDDELGFHSGEVVEVLDSSNPSWWTGRLHNKLGLFPANYVAPMTR) constitute an SH3 2 domain.

This sequence belongs to the GRB2/sem-5/DRK family. Interacts with phosphorylated LIME1 upon TCR activation. Interacts with phosphorylated LAT and LAX1 upon TCR activation. Interacts with SHB. Interacts with PTPN23.

The protein localises to the nucleus. The protein resides in the cytoplasm. It is found in the endosome. Its function is as follows. Interacts with SLP-76 to regulate NF-AT activation. Binds to tyrosine-phosphorylated shc. In Homo sapiens (Human), this protein is GRB2-related adapter protein 2 (GRAP2).